The primary structure comprises 299 residues: MKRYLITGGTGMVGSHLVNEIKQTDAHITILTRQDKTSNHPKITYINWSKEGWQHQVPDIDIVINLAGATLNKRWTSSHKQAMMLSRIQSTQTLFELFETREHKPEVLFNASAMGYYPPDLFTSYTELYRTLPFDFLSEIVYQWERFANKFKQFGTRVVLGRFGLILSDDGGALEMMELPYRLYVGGKLGSGRQWYSWIHIDDLIRGILFTINHDNAEGPFNLTAPIPERQNLFGYTLARAMHKPHETWAPKLILRAVLGQMSTVILDTQKVLPNKLHALGFEFKYNNLRNALDDLIKA.

Belongs to the NAD(P)-dependent epimerase/dehydratase family. SDR39U1 subfamily.

The chain is Epimerase family protein SERP0438 from Staphylococcus epidermidis (strain ATCC 35984 / DSM 28319 / BCRC 17069 / CCUG 31568 / BM 3577 / RP62A).